A 335-amino-acid chain; its full sequence is Ferrochelatase (335 aa).

Residues His-207 and Glu-288 each coordinate Fe cation.

Belongs to the ferrochelatase family.

Its subcellular location is the cytoplasm. It catalyses the reaction heme b + 2 H(+) = protoporphyrin IX + Fe(2+). The protein operates within porphyrin-containing compound metabolism; protoheme biosynthesis; protoheme from protoporphyrin-IX: step 1/1. Functionally, catalyzes the ferrous insertion into protoporphyrin IX. This chain is Ferrochelatase, found in Helicobacter pylori (strain G27).